Here is a 557-residue protein sequence, read N- to C-terminus: Potassium-transporting ATPase potassium-binding subunit (557 aa).

Helical transmembrane passes span 5 to 25 (GFLL…PLGS), 63 to 83 (LSAI…MLLG), 132 to 152 (GLTV…FALI), 170 to 190 (LLRI…LFFI), 253 to 273 (FVQM…FGEV), 283 to 303 (LLWA…WAEV), 329 to 349 (VLVS…AVIA), 356 to 376 (ALGG…FGGV), 379 to 399 (GLYG…LMIG), 416 to 436 (LTAL…ALAM), 484 to 504 (LLAL…MAIA), and 526 to 546 (LFVG…FIPA).

The protein belongs to the KdpA family. In terms of assembly, the system is composed of three essential subunits: KdpA, KdpB and KdpC.

It localises to the cell inner membrane. In terms of biological role, part of the high-affinity ATP-driven potassium transport (or Kdp) system, which catalyzes the hydrolysis of ATP coupled with the electrogenic transport of potassium into the cytoplasm. This subunit binds the periplasmic potassium ions and delivers the ions to the membrane domain of KdpB through an intramembrane tunnel. This is Potassium-transporting ATPase potassium-binding subunit from Escherichia coli O6:K15:H31 (strain 536 / UPEC).